A 130-amino-acid polypeptide reads, in one-letter code: DNA-directed RNA polymerase subunit omega (130 aa).

The interval 110–130 (EELLKGLEGLAPPEEQPEEDE) is disordered.

The protein belongs to the RNA polymerase subunit omega family. In terms of assembly, the RNAP catalytic core consists of 2 alpha, 1 beta, 1 beta' and 1 omega subunit. When a sigma factor is associated with the core the holoenzyme is formed, which can initiate transcription.

It catalyses the reaction RNA(n) + a ribonucleoside 5'-triphosphate = RNA(n+1) + diphosphate. Functionally, promotes RNA polymerase assembly. Latches the N- and C-terminal regions of the beta' subunit thereby facilitating its interaction with the beta and alpha subunits. In Bradyrhizobium sp. (strain BTAi1 / ATCC BAA-1182), this protein is DNA-directed RNA polymerase subunit omega.